We begin with the raw amino-acid sequence, 250 residues long: Virulence plasmid protein pGP6-D-related protein (250 aa).

Belongs to the UPF0137 (pGP6-D) family.

The protein is Virulence plasmid protein pGP6-D-related protein of Chlamydia pneumoniae (Chlamydophila pneumoniae).